The chain runs to 1113 residues: Histone deacetylase 5 (1113 aa).

The disordered stretch occupies residues 1–22; it reads MNSPNESDGMSGREPSLGILPR. K35 is covalently cross-linked (Glycyl lysine isopeptide (Lys-Gly) (interchain with G-Cter in SUMO2)). Disordered stretches follow at residues 39–63 and 187–272; these read PGAMPSSMGGGGGGSPSPVELRGAL and KEPT…SSPL. Over residues 238-249 the composition is skewed to basic and acidic residues; it reads DSRDDFPLRKTA. S250 carries the phosphoserine; by AMPK, CaMK1, SIK1 and PKD/PRKD1 modification. A compositionally biased stretch (basic and acidic residues) spans 263–272; that stretch reads KVAERRSSPL. T283 is subject to Phosphothreonine; by PKC. The tract at residues 472 to 494 is disordered; the sequence is RTVGKLPRHRPLSRTQSSPLPQS. Over residues 484-494 the composition is skewed to low complexity; it reads SRTQSSPLPQS. Phosphoserine; by AMPK, CaMK1, SIK1 and PKD/PRKD1 is present on S488. An N6-acetyllysine modification is found at K523. Residues 526-611 are disordered; the sequence is TKTGELSRQP…PDEGPDLEES (86 aa). Residues 571 to 610 are compositionally biased toward acidic residues; sequence STQEDLEEEEEEEEEEEEDCIQVKDEDGESGPDEGPDLEE. Residues S600 and S650 each carry the phosphoserine modification. A histone deacetylase region spans residues 675–1019; it reads GVVYDTFMLK…VSALLSVELQ (345 aa). Zn(2+) contacts are provided by C687, C689, H695, and C772. The active site involves H824. The Nuclear export signal motif lies at 1072 to 1113; sequence EEAETVSAMALLSVGAEQAQAVATQEHSPRPAEEPMEQEPAL. The segment at 1088–1113 is disordered; that stretch reads EQAQAVATQEHSPRPAEEPMEQEPAL. Phosphoserine is present on S1099.

The protein belongs to the histone deacetylase family. HD type 2 subfamily. As to quaternary structure, interacts with AHRR, BAHD1, BCOR, HDAC7, HDAC9, CTBP1, MEF2C, NCOR2, NRIP1, PHB2 and a 14-3-3 chaperone protein. Interacts with BCL6, DDIT3/CHOP, GRK5, KDM5B and MYOCD. Interacts with EP300 in the presence of TFAP2C. Interacts with ANKRA2. Interacts with CUL7 (as part of the 3M complex); negatively regulated by ANKRA2. Interacts with ZBTB7B; the interaction allows the recruitment of HDAC4 on CD8 loci for deacetylation and possible inhibition of CD8 genes expression. Interacts with RARA. Post-translationally, phosphorylated by AMPK, CaMK1, SIK1 and PRKD1 at Ser-250 and Ser-488. The phosphorylation is required for the export to the cytoplasm and inhibition. Phosphorylated by the PKC kinases PKN1 and PKN2, impairing nuclear import. Phosphorylated by GRK5, leading to nuclear export of HDAC5 and allowing MEF2-mediated transcription. Ubiquitinated. Polyubiquitination however does not lead to its degradation.

It localises to the nucleus. The protein localises to the cytoplasm. It carries out the reaction N(6)-acetyl-L-lysyl-[histone] + H2O = L-lysyl-[histone] + acetate. Functionally, responsible for the deacetylation of lysine residues on the N-terminal part of the core histones (H2A, H2B, H3 and H4). Histone deacetylation gives a tag for epigenetic repression and plays an important role in transcriptional regulation, cell cycle progression and developmental events. Histone deacetylases act via the formation of large multiprotein complexes. Involved in muscle maturation by repressing transcription of myocyte enhancer MEF2C. During muscle differentiation, it shuttles into the cytoplasm, allowing the expression of myocyte enhancer factors. Serves as a corepressor of RARA and causes its deacetylation. In association with RARA, plays a role in the repression of microRNA-10a and thereby in the inflammatory response. In Mus musculus (Mouse), this protein is Histone deacetylase 5 (Hdac5).